The primary structure comprises 295 residues: Foldase protein PrsA (295 aa).

The signal sequence occupies residues 1-19 (MKKVLIGFASIAMAFTLAA). Residue C20 is the site of N-palmitoyl cysteine attachment. Residue C20 is the site of S-diacylglycerol cysteine attachment. The PpiC domain occupies 136–229 (EPKVTVAQIL…YGYQVIKMIN (94 aa)).

This sequence belongs to the PrsA family.

The protein localises to the cell membrane. It catalyses the reaction [protein]-peptidylproline (omega=180) = [protein]-peptidylproline (omega=0). Plays a major role in protein secretion by helping the post-translocational extracellular folding of several secreted proteins. This Pediococcus pentosaceus (strain ATCC 25745 / CCUG 21536 / LMG 10740 / 183-1w) protein is Foldase protein PrsA.